A 135-amino-acid polypeptide reads, in one-letter code: Large ribosomal subunit protein uL22 (135 aa).

The protein belongs to the universal ribosomal protein uL22 family. Part of the 50S ribosomal subunit.

Functionally, this protein binds specifically to 23S rRNA; its binding is stimulated by other ribosomal proteins, e.g. L4, L17, and L20. It is important during the early stages of 50S assembly. It makes multiple contacts with different domains of the 23S rRNA in the assembled 50S subunit and ribosome. Its function is as follows. The globular domain of the protein is located near the polypeptide exit tunnel on the outside of the subunit, while an extended beta-hairpin is found that lines the wall of the exit tunnel in the center of the 70S ribosome. This Christiangramia forsetii (strain DSM 17595 / CGMCC 1.15422 / KT0803) (Gramella forsetii) protein is Large ribosomal subunit protein uL22.